A 383-amino-acid polypeptide reads, in one-letter code: tRNA-specific 2-thiouridylase MnmA (383 aa).

ATP-binding positions include Gly9 to Ser16 and Met35. Residues Asn95–Asp97 form an interaction with target base in tRNA region. The active-site Nucleophile is the Cys100. A disulfide bridge links Cys100 with Cys196. Residue Gly124 participates in ATP binding. Positions Lys146–Gln148 are interaction with tRNA. Residue Cys196 is the Cysteine persulfide intermediate of the active site. The segment at Arg308–Tyr309 is interaction with tRNA.

It belongs to the MnmA/TRMU family.

It is found in the cytoplasm. The catalysed reaction is S-sulfanyl-L-cysteinyl-[protein] + uridine(34) in tRNA + AH2 + ATP = 2-thiouridine(34) in tRNA + L-cysteinyl-[protein] + A + AMP + diphosphate + H(+). Its function is as follows. Catalyzes the 2-thiolation of uridine at the wobble position (U34) of tRNA, leading to the formation of s(2)U34. The chain is tRNA-specific 2-thiouridylase MnmA from Burkholderia pseudomallei (strain 1106a).